The primary structure comprises 159 residues: Transcriptional repressor NrdR (159 aa).

The tract at residues 1–21 is disordered; that stretch reads MRCPKCQHNKSNVIDSRQAED. A zinc finger spans residues 3-34; the sequence is CPKCQHNKSNVIDSRQAEDGNTIRRRRECDAC. One can recognise an ATP-cone domain in the interval 49 to 139; it reads LLVVKKDGTR…VYRSFKDVDE (91 aa).

This sequence belongs to the NrdR family. The cofactor is Zn(2+).

Negatively regulates transcription of bacterial ribonucleotide reductase nrd genes and operons by binding to NrdR-boxes. This Streptococcus thermophilus (strain ATCC BAA-491 / LMD-9) protein is Transcriptional repressor NrdR.